Here is a 167-residue protein sequence, read N- to C-terminus: Ribosome maturation factor RimM (167 aa).

The PRC barrel domain maps to 94–166; sequence DDRAWLHELE…YIHVPRFDEF (73 aa).

Belongs to the RimM family. As to quaternary structure, binds ribosomal protein uS19.

The protein resides in the cytoplasm. An accessory protein needed during the final step in the assembly of 30S ribosomal subunit, possibly for assembly of the head region. Essential for efficient processing of 16S rRNA. May be needed both before and after RbfA during the maturation of 16S rRNA. It has affinity for free ribosomal 30S subunits but not for 70S ribosomes. The protein is Ribosome maturation factor RimM of Chlorobium luteolum (strain DSM 273 / BCRC 81028 / 2530) (Pelodictyon luteolum).